The chain runs to 148 residues: MFALRSIRSATKAFQTTSIVSQRGFLQTTLKNVLFPTERQLRRQYLADNHIKVGSPEFDKFYEDLQPSELSKQSGLSDALLDDPILHICVIKYNKNIVQRYNLTPEQEKDIMENYNVSAGDPSLEQILPIPVPAHIFEELPIVKVLNN.

A mitochondrion-targeting transit peptide spans 1–24 (MFALRSIRSATKAFQTTSIVSQRG).

Slime mold cytochrome c oxidase consists of at least seven different polypeptides species, subunits I, II, III, IV, V, VI, and VIIe/s in order of MW.

It localises to the mitochondrion inner membrane. The enzyme catalyses 4 Fe(II)-[cytochrome c] + O2 + 8 H(+)(in) = 4 Fe(III)-[cytochrome c] + 2 H2O + 4 H(+)(out). This protein is one of the nuclear-coded polypeptide chains of cytochrome c oxidase, the terminal oxidase in mitochondrial electron transport. The chain is Cytochrome c oxidase subunit 4, mitochondrial (cxdA) from Dictyostelium discoideum (Social amoeba).